A 208-amino-acid chain; its full sequence is Guanylate kinase (208 aa).

Residues 4-185 (GNLYILSAPS…ALADLVHILR (182 aa)) enclose the Guanylate kinase-like domain. Residue 11–18 (APSGAGKS) coordinates ATP.

The protein belongs to the guanylate kinase family.

Its subcellular location is the cytoplasm. The enzyme catalyses GMP + ATP = GDP + ADP. In terms of biological role, essential for recycling GMP and indirectly, cGMP. This is Guanylate kinase from Mannheimia succiniciproducens (strain KCTC 0769BP / MBEL55E).